The primary structure comprises 142 residues: Large ribosomal subunit protein uL11 (142 aa).

Belongs to the universal ribosomal protein uL11 family. Part of the ribosomal stalk of the 50S ribosomal subunit. Interacts with L10 and the large rRNA to form the base of the stalk. L10 forms an elongated spine to which L12 dimers bind in a sequential fashion forming a multimeric L10(L12)X complex. In terms of processing, one or more lysine residues are methylated.

Functionally, forms part of the ribosomal stalk which helps the ribosome interact with GTP-bound translation factors. This is Large ribosomal subunit protein uL11 from Citrobacter koseri (strain ATCC BAA-895 / CDC 4225-83 / SGSC4696).